A 356-amino-acid chain; its full sequence is Histidinol-phosphate aminotransferase (356 aa).

Lys-214 is subject to N6-(pyridoxal phosphate)lysine.

This sequence belongs to the class-II pyridoxal-phosphate-dependent aminotransferase family. Histidinol-phosphate aminotransferase subfamily. Homodimer. It depends on pyridoxal 5'-phosphate as a cofactor.

It carries out the reaction L-histidinol phosphate + 2-oxoglutarate = 3-(imidazol-4-yl)-2-oxopropyl phosphate + L-glutamate. It participates in amino-acid biosynthesis; L-histidine biosynthesis; L-histidine from 5-phospho-alpha-D-ribose 1-diphosphate: step 7/9. The protein is Histidinol-phosphate aminotransferase (hisC) of Escherichia coli O157:H7.